Here is a 409-residue protein sequence, read N- to C-terminus: Divalent metal cation transporter MntH (409 aa).

The next 11 helical transmembrane spans lie at 19–39 (LSLM…GNFA), 46–66 (ASFG…AMLI), 98–118 (WVQA…GAAI), 122–142 (LLLG…TFLI), 155–175 (LVIG…LVFS), 196–216 (AVFL…IYLH), 241–261 (IAMT…AAAF), 290–310 (IFGL…TLAG), 320–340 (FYIP…IVIL), 348–368 (ILVM…VPLL), and 388–408 (ILGK…LVSL).

The protein belongs to the NRAMP family.

Its subcellular location is the cell inner membrane. Functionally, h(+)-stimulated, divalent metal cation uptake system. The chain is Divalent metal cation transporter MntH from Yersinia enterocolitica serotype O:8 / biotype 1B (strain NCTC 13174 / 8081).